Reading from the N-terminus, the 192-residue chain is Large ribosomal subunit protein uL5 (192 aa).

Belongs to the universal ribosomal protein uL5 family. Part of the 50S ribosomal subunit; part of the 5S rRNA/L5/L18/L25 subcomplex. Contacts the 5S rRNA and the P site tRNA. Forms a bridge to the 30S subunit in the 70S ribosome.

Its function is as follows. This is one of the proteins that bind and probably mediate the attachment of the 5S RNA into the large ribosomal subunit, where it forms part of the central protuberance. In the 70S ribosome it contacts protein S13 of the 30S subunit (bridge B1b), connecting the 2 subunits; this bridge is implicated in subunit movement. Contacts the P site tRNA; the 5S rRNA and some of its associated proteins might help stabilize positioning of ribosome-bound tRNAs. The chain is Large ribosomal subunit protein uL5 from Zymomonas mobilis subsp. mobilis (strain ATCC 31821 / ZM4 / CP4).